The following is a 306-amino-acid chain: Pyridoxal 5'-phosphate synthase subunit PdxS (306 aa).

Residue D36 coordinates D-ribose 5-phosphate. K93 (schiff-base intermediate with D-ribose 5-phosphate) is an active-site residue. D-ribose 5-phosphate is bound at residue G165. D-glyceraldehyde 3-phosphate is bound at residue R177. D-ribose 5-phosphate is bound by residues G226 and 247-248; that span reads GS.

This sequence belongs to the PdxS/SNZ family. As to quaternary structure, in the presence of PdxT, forms a dodecamer of heterodimers.

The catalysed reaction is aldehydo-D-ribose 5-phosphate + D-glyceraldehyde 3-phosphate + L-glutamine = pyridoxal 5'-phosphate + L-glutamate + phosphate + 3 H2O + H(+). Its pathway is cofactor biosynthesis; pyridoxal 5'-phosphate biosynthesis. Its function is as follows. Catalyzes the formation of pyridoxal 5'-phosphate from ribose 5-phosphate (RBP), glyceraldehyde 3-phosphate (G3P) and ammonia. The ammonia is provided by the PdxT subunit. Can also use ribulose 5-phosphate and dihydroxyacetone phosphate as substrates, resulting from enzyme-catalyzed isomerization of RBP and G3P, respectively. The sequence is that of Pyridoxal 5'-phosphate synthase subunit PdxS from Salinispora tropica (strain ATCC BAA-916 / DSM 44818 / JCM 13857 / NBRC 105044 / CNB-440).